A 240-amino-acid polypeptide reads, in one-letter code: Protein unc-119 homolog A (240 aa).

A compositionally biased stretch (gly residues) spans 1-12; it reads MKVKKGGGGTGP. The segment at 1 to 62 is disordered; it reads MKVKKGGGGT…PLQGKQPIGP (62 aa). Ser37, Ser39, and Ser41 each carry phosphoserine; by CK2. Tyr131 provides a ligand contact to tetradecanoate.

This sequence belongs to the PDE6D/unc-119 family. In terms of assembly, interacts with CABP4; in the absence of calcium. May interact with GTP-bound ARL1. Interacts with ARL2 and ARL3 (GTP-bound forms); this promotes the release of myristoylated cargo proteins. Found in a complex with ARL3, RP2 and UNC119; RP2 induces hydrolysis of GTP ARL3 in the complex, leading to the release of UNC119. Interacts with NPHP3 (when myristoylated). Interacts with CYS1 (when myristoylated). Interacts with MACIR; interaction only takes place when UNC119 is not liganded with myristoylated proteins. Interacts with ARL1 and ARL3 GTP-bound forms. Interacts with ARL2. Interacts with ARL2. Interacts with LCK; this interaction plays a crucial role in activation of LCK. Interacts with FYN. Interacts with RAB11A; in a cell cycle-dependent manner. Interacts with LYN (via SH2 and SH3 domains); leading to LYN activation. Interacts with DNM1; leading to a decrease of DNM1 GTPase activity. Found in a complex with ABL1, ABL2, CRK and UNC119; leading to the inhibition of CRK phosphorylation by ABL kinases. Interacts with CD44. Interacts with KLHL18 (via kelch repeats). Interacts with PPP3CA, PPP3CB and PPP3CC. Interacts with USP48; this interaction promotes UNC119 stability. Post-translationally, phosphorylation suppresses its interaction with KLHL18 and down-regulates its KLHL18-mediated degradation. Phosphorylated more under light conditions than dark conditions. Dephosphorylated by calcineurin.

The protein resides in the cytoplasm. It localises to the cytoskeleton. Its subcellular location is the microtubule organizing center. The protein localises to the centrosome. It is found in the spindle. The protein resides in the spindle pole. In terms of biological role, involved in synaptic functions in photoreceptor cells, the signal transduction in immune cells as a Src family kinase activator, endosome recycling, the uptake of bacteria and endocytosis, protein trafficking in sensory neurons and as lipid-binding chaperone with specificity for a diverse subset of myristoylated proteins. Specifically binds the myristoyl moiety of a subset of N-terminally myristoylated proteins and is required for their localization. Binds myristoylated GNAT1 and is required for G-protein localization and trafficking in sensory neurons. Probably plays a role in trafficking proteins in photoreceptor cells. Plays important roles in mediating Src family kinase signals for the completion of cytokinesis via RAB11A. In Rattus norvegicus (Rat), this protein is Protein unc-119 homolog A (Unc119).